Here is a 380-residue protein sequence, read N- to C-terminus: Cytochrome b (380 aa).

4 helical membrane-spanning segments follow: residues 33–53 (FGSL…FLAM), 77–98 (WLIR…YFHI), 113–133 (WNIG…GYVL), and 178–198 (FFAF…LHLL). His-83 and His-97 together coordinate heme b. Residues His-182 and His-196 each contribute to the heme b site. His-201 contributes to the a ubiquinone binding site. 4 helical membrane passes run 226 to 246 (YKDL…ALFS), 288 to 308 (LGGV…PFLH), 320 to 340 (VSQF…WIGG), and 347 to 367 (FIII…VFFP).

Belongs to the cytochrome b family. As to quaternary structure, the cytochrome bc1 complex contains 3 respiratory subunits (MT-CYB, CYC1 and UQCRFS1), 2 core proteins (UQCRC1 and UQCRC2) and probably 6 low-molecular weight proteins. The cofactor is heme b.

The protein resides in the mitochondrion inner membrane. Functionally, component of the ubiquinol-cytochrome c reductase complex (complex III or cytochrome b-c1 complex) that is part of the mitochondrial respiratory chain. The b-c1 complex mediates electron transfer from ubiquinol to cytochrome c. Contributes to the generation of a proton gradient across the mitochondrial membrane that is then used for ATP synthesis. This is Cytochrome b (mt-cyb) from Sarda sarda (Atlantic bonito).